A 249-amino-acid chain; its full sequence is Probable transcriptional regulatory protein Sfum_0996 (249 aa).

It belongs to the TACO1 family.

The protein localises to the cytoplasm. This is Probable transcriptional regulatory protein Sfum_0996 from Syntrophobacter fumaroxidans (strain DSM 10017 / MPOB).